The sequence spans 252 residues: Protein A47 (252 aa).

The protein belongs to the orthopoxvirus A47 protein family.

In Vaccinia virus (strain Western Reserve) (VACV), this protein is Protein A47.